A 271-amino-acid polypeptide reads, in one-letter code: Putative phosphoenolpyruvate synthase regulatory protein (271 aa).

151-158 (GVSRSGKT) provides a ligand contact to ADP.

This sequence belongs to the pyruvate, phosphate/water dikinase regulatory protein family. PSRP subfamily.

The catalysed reaction is [pyruvate, water dikinase] + ADP = [pyruvate, water dikinase]-phosphate + AMP + H(+). It carries out the reaction [pyruvate, water dikinase]-phosphate + phosphate + H(+) = [pyruvate, water dikinase] + diphosphate. In terms of biological role, bifunctional serine/threonine kinase and phosphorylase involved in the regulation of the phosphoenolpyruvate synthase (PEPS) by catalyzing its phosphorylation/dephosphorylation. The polypeptide is Putative phosphoenolpyruvate synthase regulatory protein (Burkholderia vietnamiensis (strain G4 / LMG 22486) (Burkholderia cepacia (strain R1808))).